The following is a 173-amino-acid chain: Crossover junction endodeoxyribonuclease RuvC (173 aa).

Active-site residues include Asp8, Glu67, and Asp139. Mg(2+) is bound by residues Asp8, Glu67, and Asp139.

Belongs to the RuvC family. Homodimer which binds Holliday junction (HJ) DNA. The HJ becomes 2-fold symmetrical on binding to RuvC with unstacked arms; it has a different conformation from HJ DNA in complex with RuvA. In the full resolvosome a probable DNA-RuvA(4)-RuvB(12)-RuvC(2) complex forms which resolves the HJ. Mg(2+) serves as cofactor.

The protein localises to the cytoplasm. It carries out the reaction Endonucleolytic cleavage at a junction such as a reciprocal single-stranded crossover between two homologous DNA duplexes (Holliday junction).. In terms of biological role, the RuvA-RuvB-RuvC complex processes Holliday junction (HJ) DNA during genetic recombination and DNA repair. Endonuclease that resolves HJ intermediates. Cleaves cruciform DNA by making single-stranded nicks across the HJ at symmetrical positions within the homologous arms, yielding a 5'-phosphate and a 3'-hydroxyl group; requires a central core of homology in the junction. The consensus cleavage sequence is 5'-(A/T)TT(C/G)-3'. Cleavage occurs on the 3'-side of the TT dinucleotide at the point of strand exchange. HJ branch migration catalyzed by RuvA-RuvB allows RuvC to scan DNA until it finds its consensus sequence, where it cleaves and resolves the cruciform DNA. This Erwinia tasmaniensis (strain DSM 17950 / CFBP 7177 / CIP 109463 / NCPPB 4357 / Et1/99) protein is Crossover junction endodeoxyribonuclease RuvC.